A 510-amino-acid chain; its full sequence is 2,3-bisphosphoglycerate-independent phosphoglycerate mutase (510 aa).

Residues Asp12 and Ser62 each coordinate Mn(2+). Ser62 (phosphoserine intermediate) is an active-site residue. Substrate is bound by residues His123, 153-154 (RD), Arg185, Arg191, 260-263 (RPDR), and Lys335. Mn(2+) is bound by residues Asp402, His406, Asp443, His444, and His461.

The protein belongs to the BPG-independent phosphoglycerate mutase family. In terms of assembly, monomer. Mn(2+) serves as cofactor.

It carries out the reaction (2R)-2-phosphoglycerate = (2R)-3-phosphoglycerate. It participates in carbohydrate degradation; glycolysis; pyruvate from D-glyceraldehyde 3-phosphate: step 3/5. Functionally, catalyzes the interconversion of 2-phosphoglycerate and 3-phosphoglycerate. The protein is 2,3-bisphosphoglycerate-independent phosphoglycerate mutase of Listeria innocua serovar 6a (strain ATCC BAA-680 / CLIP 11262).